The chain runs to 191 residues: Signal peptidase IB (191 aa).

Residues 1–7 (MKKELLE) are Cytoplasmic-facing. Residues 8–28 (WIISIAVAFVILFIVGKFIVT) traverse the membrane as a helical segment. The Extracellular portion of the chain corresponds to 29–191 (PYTIKGESMD…YNFNPENTKN (163 aa)). Active-site residues include Ser-36 and Lys-77.

The protein belongs to the peptidase S26 family.

Its subcellular location is the cell membrane. It carries out the reaction Cleavage of hydrophobic, N-terminal signal or leader sequences from secreted and periplasmic proteins.. Essential for cell viability. This Staphylococcus aureus (strain MRSA252) protein is Signal peptidase IB (spsB).